Here is a 235-residue protein sequence, read N- to C-terminus: Large ribosomal subunit protein uL1 (235 aa).

Belongs to the universal ribosomal protein uL1 family. Part of the 50S ribosomal subunit.

Its function is as follows. Binds directly to 23S rRNA. The L1 stalk is quite mobile in the ribosome, and is involved in E site tRNA release. Protein L1 is also a translational repressor protein, it controls the translation of the L11 operon by binding to its mRNA. The sequence is that of Large ribosomal subunit protein uL1 from Mycolicibacterium paratuberculosis (strain ATCC BAA-968 / K-10) (Mycobacterium paratuberculosis).